The sequence spans 294 residues: Nucleotide-binding protein Dtur_1129 (294 aa).

Residue 10-17 participates in ATP binding; it reads GLSGAGKS. Residue 61–64 coordinates GTP; it reads DIRT.

It belongs to the RapZ-like family.

In terms of biological role, displays ATPase and GTPase activities. This is Nucleotide-binding protein Dtur_1129 from Dictyoglomus turgidum (strain DSM 6724 / Z-1310).